Here is a 361-residue protein sequence, read N- to C-terminus: tRNA-specific 2-thiouridylase MnmA (361 aa).

Residues 8-15 (AMSGGVDS) and Met35 contribute to the ATP site. Residues 95–97 (NPD) form an interaction with target base in tRNA region. The active-site Nucleophile is the Cys100. Cysteines 100 and 196 form a disulfide. Residue Gly124 participates in ATP binding. The interaction with tRNA stretch occupies residues 146-148 (KDQ). The active-site Cysteine persulfide intermediate is Cys196. Residues 303–304 (RY) are interaction with tRNA.

The protein belongs to the MnmA/TRMU family.

It is found in the cytoplasm. The enzyme catalyses S-sulfanyl-L-cysteinyl-[protein] + uridine(34) in tRNA + AH2 + ATP = 2-thiouridine(34) in tRNA + L-cysteinyl-[protein] + A + AMP + diphosphate + H(+). In terms of biological role, catalyzes the 2-thiolation of uridine at the wobble position (U34) of tRNA, leading to the formation of s(2)U34. In Chlamydia felis (strain Fe/C-56) (Chlamydophila felis), this protein is tRNA-specific 2-thiouridylase MnmA.